We begin with the raw amino-acid sequence, 509 residues long: Photosystem II CP47 reaction center protein (509 aa).

The next 6 membrane-spanning stretches (helical) occupy residues 21–36 (AVHL…WAGS), 101–115 (IVLS…IWHW), 140–156 (GIHL…FGAF), 203–218 (IAAG…FHLT), 237–252 (VLSS…AFVT), and 457–472 (NFAL…HGSR).

The protein belongs to the PsbB/PsbC family. PsbB subfamily. PSII is composed of 1 copy each of membrane proteins PsbA, PsbB, PsbC, PsbD, PsbE, PsbF, PsbH, PsbI, PsbJ, PsbK, PsbL, PsbM, PsbT, PsbX, PsbY, PsbZ, Psb30/Ycf12, at least 3 peripheral proteins of the oxygen-evolving complex and a large number of cofactors. It forms dimeric complexes. Binds multiple chlorophylls. PSII binds additional chlorophylls, carotenoids and specific lipids. serves as cofactor.

The protein localises to the plastid. Its subcellular location is the chloroplast thylakoid membrane. In terms of biological role, one of the components of the core complex of photosystem II (PSII). It binds chlorophyll and helps catalyze the primary light-induced photochemical processes of PSII. PSII is a light-driven water:plastoquinone oxidoreductase, using light energy to abstract electrons from H(2)O, generating O(2) and a proton gradient subsequently used for ATP formation. The polypeptide is Photosystem II CP47 reaction center protein (Pyropia yezoensis (Susabi-nori)).